A 283-amino-acid polypeptide reads, in one-letter code: N-terminal Xaa-Pro-Lys N-methyltransferase 2 (283 aa).

Residues G124, R129, D146, 174–175, and Q190 each bind S-adenosyl-L-methionine; that span reads LQ.

This sequence belongs to the methyltransferase superfamily. NTM1 family.

It localises to the nucleus. The catalysed reaction is N-terminal L-alanyl-L-prolyl-L-lysyl-[protein] + S-adenosyl-L-methionine = N-terminal N-methyl-L-alanyl-L-prolyl-L-lysyl-[protein] + S-adenosyl-L-homocysteine + H(+). It carries out the reaction N-terminal L-prolyl-L-prolyl-L-lysyl-[protein] + S-adenosyl-L-methionine = N-terminal N-methyl-L-prolyl-L-prolyl-L-lysyl-[protein] + S-adenosyl-L-homocysteine + H(+). The enzyme catalyses N-terminal L-seryl-L-prolyl-L-lysyl-[protein] + S-adenosyl-L-methionine = N-terminal N-methyl-L-seryl-L-prolyl-L-lysyl-[protein] + S-adenosyl-L-homocysteine + H(+). Alpha N-methyltransferase that methylates the N-terminus of target proteins containing the N-terminal motif [Ala/Pro/Ser]-Pro-Lys when the initiator Met is cleaved. Specifically catalyzes monomethylation of exposed alpha-amino group of Ala or Ser residue in the [Ala/Ser]-Pro-Lys motif and Pro in the Pro-Pro-Lys motif. Predominantly functions as a mono-methyltransferase but is also able to di-/tri-methylate the GPKRIA peptide and di-methylate the PPKRIA peptide (in vitro). May activate NTMT1 by priming its substrates for trimethylation. In Mus musculus (Mouse), this protein is N-terminal Xaa-Pro-Lys N-methyltransferase 2 (Ntmt2).